The primary structure comprises 278 residues: Gap junction delta-3 protein (278 aa).

Topologically, residues 1-24 are cytoplasmic; the sequence is MGEWAFLGSLLDAVQLQSPLVGRL. Residues 25–45 traverse the membrane as a helical segment; the sequence is WLVIMLIFRILVLATVGGAVF. At 46 to 76 the chain is on the extracellular side; that stretch reads EDEQEEFVCNTLQPGCRQTCYDRAFPVSHYR. A helical membrane pass occupies residues 77–97; the sequence is FWLFHILLLSAPPVLFVIYSM. The Cytoplasmic segment spans residues 98-136; the sequence is HQASKEAGGAQLAPPCARGRAEAPCSPCALRARRARRCY. The helical transmembrane segment at 137–157 threads the bilayer; sequence LLSVALRLLAELAFLGGQALL. Residues 158 to 188 lie on the Extracellular side of the membrane; that stretch reads YGFRVDPHYACAGPPCPHTVDCFVSRPTEKT. The chain crosses the membrane as a helical span at residues 189–209; it reads VFVVFYFAVGLLSALLSVAEL. The Cytoplasmic portion of the chain corresponds to 210 to 278; it reads GHLLWKGRQR…LATVRQDLAI (69 aa). The tract at residues 223 to 278 is disordered; sequence LPPPPPSPSLPSQRGDPDPFGPPAYAHRSPAGDSEGEGGSGHSKASLATVRQDLAI.

It belongs to the connexin family. Delta-type subfamily. As to quaternary structure, a connexon is composed of a hexamer of connexins.

Its subcellular location is the cell membrane. It localises to the cell junction. It is found in the gap junction. In terms of biological role, one gap junction consists of a cluster of closely packed pairs of transmembrane channels, the connexons, through which materials of low MW diffuse from one cell to a neighboring cell. This is Gap junction delta-3 protein (Gjd3) from Mus musculus (Mouse).